A 108-amino-acid chain; its full sequence is Abscisic stress-ripening protein 3 (108 aa).

Disordered stretches follow at residues 1–34 (MAEEKQHHRLFHHKNREEEGGPVDHKKKVKHHSH) and 84–108 (FAFHEHHQKKEAKKEKKAAEKGRHH). Positions 15 to 24 (NREEEGGPVD) are enriched in basic and acidic residues. Residues 25 to 34 (HKKKVKHHSH) show a composition bias toward basic residues. Positions 95–108 (AKKEKKAAEKGRHH) are enriched in basic and acidic residues.

It belongs to the abscisic acid and water stress-induced protein family.

This is Abscisic stress-ripening protein 3 from Solanum lycopersicum (Tomato).